Reading from the N-terminus, the 485-residue chain is Trigger factor (485 aa).

The PPIase FKBP-type domain occupies Gly-169–Pro-261.

This sequence belongs to the FKBP-type PPIase family. Tig subfamily.

It localises to the cytoplasm. It catalyses the reaction [protein]-peptidylproline (omega=180) = [protein]-peptidylproline (omega=0). Involved in protein export. Acts as a chaperone by maintaining the newly synthesized protein in an open conformation. Functions as a peptidyl-prolyl cis-trans isomerase. The chain is Trigger factor from Trichodesmium erythraeum (strain IMS101).